A 20-amino-acid polypeptide reads, in one-letter code: Brevinin-1SPd (20 aa).

Residues Cys-14 and Cys-20 are joined by a disulfide bond.

In terms of tissue distribution, expressed by the skin glands.

It is found in the secreted. Antimicrobial peptide with activity against Gram-negative and Gram-positive bacteria (MIC=13 uM against E.coli, MIC=3 uM against S.aureus) and fungi (MIC=3 uM against C.albicans). Shows hemolytic activity on human erythrocytes (HC(50)=8 uM). The chain is Brevinin-1SPd from Lithobates septentrionalis (Mink frog).